A 132-amino-acid chain; its full sequence is Antiholin (132 aa).

Residues 1 to 16 (MMNMIEWTKHVLESDD) lie on the Periplasmic side of the membrane. Cytoplasmic loops occupy residues 1–61 (MMNM…ILIK) and 39–58 (VIARINPKEKFSSFKMKTGI). The chain crosses the membrane as a helical span at residues 17–38 (TKLIYWLTLLMVCMIVDTILGI). The chain crosses the membrane as a helical span at residues 62 to 80 (VSEMIIALLAVPFALPFPA). Residues 81–85 (GLPLL) lie on the Periplasmic side of the membrane. Residues 86 to 107 (YTVYTALCVSEMYSIFGHLRVV) form a helical membrane-spanning segment. Over 108-132 (DDKSNFLSIIEGFFKQTYRKDKGDK) the chain is Cytoplasmic.

The protein belongs to the bacteriophage holin family. phi29likevirus holin subfamily. In terms of assembly, homomultimer. Interacts with isoform Antiholin; this interaction blocks the holin homomultimerization and delays host cell lysis.

Its subcellular location is the host cell inner membrane. In terms of biological role, accumulates harmlessly in the cytoplasmic membrane until it reaches a critical concentration that triggers the formation of micron-scale pores (holes) causing host cell membrane disruption and endolysin escape into the periplasmic space. Determines the precise timing of host cell lysis. Participates with the endolysin and spanin proteins in the sequential events which lead to the programmed host cell lysis releasing the mature viral particles from the host cell. Its function is as follows. Counteracts the aggregation of the holin molecules and thus of pore formation. The protein is Antiholin (14) of Bacillus phage B103 (Bacteriophage B103).